Reading from the N-terminus, the 255-residue chain is 4-hydroxy-tetrahydrodipicolinate reductase (255 aa).

Residues 8-13, 88-90, and 112-115 each bind NAD(+); these read GATGRV, GTT, and ATNM. The Proton donor/acceptor role is filled by His144. His145 contributes to the (S)-2,3,4,5-tetrahydrodipicolinate binding site. Lys148 acts as the Proton donor in catalysis. Residue 154–155 participates in (S)-2,3,4,5-tetrahydrodipicolinate binding; the sequence is GT.

Belongs to the DapB family.

It is found in the cytoplasm. It carries out the reaction (S)-2,3,4,5-tetrahydrodipicolinate + NAD(+) + H2O = (2S,4S)-4-hydroxy-2,3,4,5-tetrahydrodipicolinate + NADH + H(+). It catalyses the reaction (S)-2,3,4,5-tetrahydrodipicolinate + NADP(+) + H2O = (2S,4S)-4-hydroxy-2,3,4,5-tetrahydrodipicolinate + NADPH + H(+). It functions in the pathway amino-acid biosynthesis; L-lysine biosynthesis via DAP pathway; (S)-tetrahydrodipicolinate from L-aspartate: step 4/4. In terms of biological role, catalyzes the conversion of 4-hydroxy-tetrahydrodipicolinate (HTPA) to tetrahydrodipicolinate. This chain is 4-hydroxy-tetrahydrodipicolinate reductase, found in Helicobacter hepaticus (strain ATCC 51449 / 3B1).